The following is a 257-amino-acid chain: Imidazole glycerol phosphate synthase subunit HisF (257 aa).

Catalysis depends on residues Asp12 and Asp131.

The protein belongs to the HisA/HisF family. Heterodimer of HisH and HisF.

It is found in the cytoplasm. It carries out the reaction 5-[(5-phospho-1-deoxy-D-ribulos-1-ylimino)methylamino]-1-(5-phospho-beta-D-ribosyl)imidazole-4-carboxamide + L-glutamine = D-erythro-1-(imidazol-4-yl)glycerol 3-phosphate + 5-amino-1-(5-phospho-beta-D-ribosyl)imidazole-4-carboxamide + L-glutamate + H(+). It participates in amino-acid biosynthesis; L-histidine biosynthesis; L-histidine from 5-phospho-alpha-D-ribose 1-diphosphate: step 5/9. Functionally, IGPS catalyzes the conversion of PRFAR and glutamine to IGP, AICAR and glutamate. The HisF subunit catalyzes the cyclization activity that produces IGP and AICAR from PRFAR using the ammonia provided by the HisH subunit. The protein is Imidazole glycerol phosphate synthase subunit HisF of Rhodococcus opacus (strain B4).